The primary structure comprises 142 residues: Putative transcriptional regulatory protein PF0535 (142 aa).

This sequence belongs to the Tfx family.

Its function is as follows. Putative transcriptional regulator. The protein is Putative transcriptional regulatory protein PF0535 of Pyrococcus furiosus (strain ATCC 43587 / DSM 3638 / JCM 8422 / Vc1).